We begin with the raw amino-acid sequence, 780 residues long: Alpha-xylosidase (780 aa).

N-linked (GlcNAc...) asparagine glycosylation is found at Asn48, Asn84, Asn247, and Asn298. Active-site residues include Asp434 and Glu437. Asn443 carries an N-linked (GlcNAc...) asparagine glycan. Asp501 functions as the Proton donor in the catalytic mechanism. N-linked (GlcNAc...) asparagine glycosylation occurs at Asn718.

It belongs to the glycosyl hydrolase 31 family.

The protein localises to the secreted. It carries out the reaction Hydrolysis of terminal, non-reducing alpha-D-xylose residues with release of alpha-D-xylose.. In terms of biological role, catalyzes the liberation of alpha-xylose from the non-reducing terminal glucose of xyloglucan oligosaccharides. The chain is Alpha-xylosidase from Emericella nidulans (strain FGSC A4 / ATCC 38163 / CBS 112.46 / NRRL 194 / M139) (Aspergillus nidulans).